A 338-amino-acid polypeptide reads, in one-letter code: Glycerol-3-phosphate dehydrogenase [NAD(P)+] (338 aa).

Residues Ser13, Trp14, and Lys108 each coordinate NADPH. Sn-glycerol 3-phosphate-binding residues include Lys108, Gly139, and Ser141. Ala143 serves as a coordination point for NADPH. Sn-glycerol 3-phosphate-binding residues include Lys194, Asp247, Ser257, Arg258, and Asn259. The Proton acceptor role is filled by Lys194. Arg258 contacts NADPH. Residues Val282 and Glu284 each contribute to the NADPH site.

Belongs to the NAD-dependent glycerol-3-phosphate dehydrogenase family.

Its subcellular location is the cytoplasm. It catalyses the reaction sn-glycerol 3-phosphate + NAD(+) = dihydroxyacetone phosphate + NADH + H(+). The enzyme catalyses sn-glycerol 3-phosphate + NADP(+) = dihydroxyacetone phosphate + NADPH + H(+). Its pathway is membrane lipid metabolism; glycerophospholipid metabolism. Catalyzes the reduction of the glycolytic intermediate dihydroxyacetone phosphate (DHAP) to sn-glycerol 3-phosphate (G3P), the key precursor for phospholipid synthesis. In Streptococcus pneumoniae (strain P1031), this protein is Glycerol-3-phosphate dehydrogenase [NAD(P)+].